The primary structure comprises 173 residues: uncharacterized protein (173 aa).

The next 4 helical transmembrane spans lie at 9 to 29, 32 to 52, 100 to 120, and 127 to 147; these read FSIC…LLCV, ICSA…TFFH, MFLC…SFIV, and FLFL…GLYP.

It localises to the membrane. This is an uncharacterized protein from Saccharomyces cerevisiae (strain ATCC 204508 / S288c) (Baker's yeast).